A 286-amino-acid polypeptide reads, in one-letter code: Pantothenate synthetase (286 aa).

An ATP-binding site is contributed by 30-37 (MGCFHQGH). His37 serves as the catalytic Proton donor. Gln61 contributes to the (R)-pantoate binding site. Residue Gln61 coordinates beta-alanine. 147–150 (GEKD) contacts ATP. Gln153 contacts (R)-pantoate. 184–187 (MSSR) lines the ATP pocket.

This sequence belongs to the pantothenate synthetase family. Homodimer.

It localises to the cytoplasm. It catalyses the reaction (R)-pantoate + beta-alanine + ATP = (R)-pantothenate + AMP + diphosphate + H(+). Its pathway is cofactor biosynthesis; (R)-pantothenate biosynthesis; (R)-pantothenate from (R)-pantoate and beta-alanine: step 1/1. Functionally, catalyzes the condensation of pantoate with beta-alanine in an ATP-dependent reaction via a pantoyl-adenylate intermediate. The sequence is that of Pantothenate synthetase from Desulfotalea psychrophila (strain LSv54 / DSM 12343).